Here is a 357-residue protein sequence, read N- to C-terminus: Peptide chain release factor 1 (357 aa).

Q234 carries the post-translational modification N5-methylglutamine. Basic and acidic residues predominate over residues 284–307; it reads KKQEQRSNDRKQQVGSGDRSERIR. The tract at residues 284 to 313 is disordered; the sequence is KKQEQRSNDRKQQVGSGDRSERIRTYNFPQ.

It belongs to the prokaryotic/mitochondrial release factor family. Methylated by PrmC. Methylation increases the termination efficiency of RF1.

It localises to the cytoplasm. In terms of biological role, peptide chain release factor 1 directs the termination of translation in response to the peptide chain termination codons UAG and UAA. This chain is Peptide chain release factor 1, found in Borrelia turicatae (strain 91E135).